The chain runs to 891 residues: UPF0182 protein Glov_0814 (891 aa).

A run of 7 helical transmembrane segments spans residues 6–26 (LTPI…LLAY), 51–71 (GIGV…LLYA), 102–122 (IGVL…ALQW), 164–184 (FMLL…GGIA), 202–222 (ILLA…GFGL), 244–264 (TLTT…FGLW), and 266–286 (GTWR…MIGM).

It belongs to the UPF0182 family.

It localises to the cell membrane. The sequence is that of UPF0182 protein Glov_0814 from Trichlorobacter lovleyi (strain ATCC BAA-1151 / DSM 17278 / SZ) (Geobacter lovleyi).